Reading from the N-terminus, the 253-residue chain is UDP-Glc:alpha-D-GlcNAc-diphosphoundecaprenol beta-1,3-glucosyltransferase WfgD (253 aa).

The protein belongs to the glycosyltransferase 2 family. The cofactor is Mn(2+). Requires Mg(2+) as cofactor.

The protein resides in the cell inner membrane. The enzyme catalyses N-acetyl-alpha-D-glucosaminyl-di-trans,octa-cis-undecaprenyl diphosphate + UDP-alpha-D-glucose = beta-D-Glc-(1-&gt;3)-alpha-D-GlcNAc-di-trans,octa-cis-undecaprenyl diphosphate + UDP + H(+). It participates in bacterial outer membrane biogenesis; lipopolysaccharide biosynthesis. In terms of biological role, catalyzes the addition of Glc, the second sugar moiety of the O152-antigen repeating unit, to GlcNAc-pyrophosphate-undecaprenol. This is UDP-Glc:alpha-D-GlcNAc-diphosphoundecaprenol beta-1,3-glucosyltransferase WfgD (wfgD) from Escherichia coli.